A 309-amino-acid polypeptide reads, in one-letter code: Ribonuclease Z (309 aa).

Zn(2+) contacts are provided by His-63, His-65, Asp-67, His-68, His-141, Asp-212, and His-270. Residue Asp-67 is the Proton acceptor of the active site.

The protein belongs to the RNase Z family. Homodimer. Zn(2+) serves as cofactor.

The enzyme catalyses Endonucleolytic cleavage of RNA, removing extra 3' nucleotides from tRNA precursor, generating 3' termini of tRNAs. A 3'-hydroxy group is left at the tRNA terminus and a 5'-phosphoryl group is left at the trailer molecule.. Its function is as follows. Zinc phosphodiesterase, which displays some tRNA 3'-processing endonuclease activity. Probably involved in tRNA maturation, by removing a 3'-trailer from precursor tRNA. This is Ribonuclease Z from Halalkalibacterium halodurans (strain ATCC BAA-125 / DSM 18197 / FERM 7344 / JCM 9153 / C-125) (Bacillus halodurans).